The sequence spans 335 residues: Cathepsin B (335 aa).

The signal sequence occupies residues 1 to 17 (MWRLLATLSCLLVLTSA). A propeptide spans 18-79 (RSSLYFPPLS…QRDAFAADVV (62 aa)) (activation peptide). 6 disulfides stabilise this stretch: cysteine 93/cysteine 122, cysteine 105/cysteine 150, cysteine 141/cysteine 207, cysteine 142/cysteine 146, cysteine 179/cysteine 211, and cysteine 187/cysteine 198. Cysteine 108 is a catalytic residue. N-linked (GlcNAc...) asparagine glycosylation is present at asparagine 192. Lysine 220 carries the N6-acetyllysine modification. Cysteine 227 and cysteine 331 are disulfide-bonded. Catalysis depends on residues histidine 278 and asparagine 298. The propeptide occupies 333-335 (HQY).

This sequence belongs to the peptidase C1 family. Dimer of a heavy chain and a light chain cross-linked by a disulfide bond. Interacts with SRPX2. Directly interacts with SHKBP1. As to expression, expressed in myoblasts, the myotube, fibroblasts and fetal muscle (at protein level). Expressed in the spleen (at protein level).

The protein localises to the lysosome. Its subcellular location is the melanosome. The protein resides in the secreted. It is found in the extracellular space. It localises to the apical cell membrane. It carries out the reaction Hydrolysis of proteins with broad specificity for peptide bonds. Preferentially cleaves -Arg-Arg-|-Xaa bonds in small molecule substrates (thus differing from cathepsin L). In addition to being an endopeptidase, shows peptidyl-dipeptidase activity, liberating C-terminal dipeptides.. Its function is as follows. Thiol protease which is believed to participate in intracellular degradation and turnover of proteins. Cleaves matrix extracellular phosphoglycoprotein MEPE. Involved in the solubilization of cross-linked TG/thyroglobulin in the thyroid follicle lumen. Has also been implicated in tumor invasion and metastasis. The protein is Cathepsin B (CTSB) of Bos taurus (Bovine).